The chain runs to 140 residues: Bacilliredoxin STH2395 (140 aa).

This sequence belongs to the bacilliredoxin family.

The chain is Bacilliredoxin STH2395 from Symbiobacterium thermophilum (strain DSM 24528 / JCM 14929 / IAM 14863 / T).